The following is a 429-amino-acid chain: Adenylosuccinate synthetase (429 aa).

Residues 12–18 (GDEGKGK) and 40–42 (GHT) contribute to the GTP site. The active-site Proton acceptor is Asp13. Mg(2+)-binding residues include Asp13 and Gly40. Residues 13–16 (DEGK), 38–41 (NAGH), Thr129, Arg143, Gln223, Thr238, and Arg302 each bind IMP. The active-site Proton donor is His41. Residue 298 to 304 (VVTGRKR) coordinates substrate. GTP is bound by residues Arg304, 330 to 332 (KLD), and 412 to 414 (STS).

It belongs to the adenylosuccinate synthetase family. As to quaternary structure, homodimer. Mg(2+) is required as a cofactor.

The protein localises to the cytoplasm. It catalyses the reaction IMP + L-aspartate + GTP = N(6)-(1,2-dicarboxyethyl)-AMP + GDP + phosphate + 2 H(+). It participates in purine metabolism; AMP biosynthesis via de novo pathway; AMP from IMP: step 1/2. Its function is as follows. Plays an important role in the de novo pathway of purine nucleotide biosynthesis. Catalyzes the first committed step in the biosynthesis of AMP from IMP. This chain is Adenylosuccinate synthetase, found in Bartonella henselae (strain ATCC 49882 / DSM 28221 / CCUG 30454 / Houston 1) (Rochalimaea henselae).